Here is a 398-residue protein sequence, read N- to C-terminus: Phosphopentomutase (398 aa).

Mn(2+) is bound by residues Asp-13, Asp-290, His-295, Asp-331, His-332, and His-343.

This sequence belongs to the phosphopentomutase family. Requires Mn(2+) as cofactor.

The protein localises to the cytoplasm. It catalyses the reaction 2-deoxy-alpha-D-ribose 1-phosphate = 2-deoxy-D-ribose 5-phosphate. The catalysed reaction is alpha-D-ribose 1-phosphate = D-ribose 5-phosphate. It participates in carbohydrate degradation; 2-deoxy-D-ribose 1-phosphate degradation; D-glyceraldehyde 3-phosphate and acetaldehyde from 2-deoxy-alpha-D-ribose 1-phosphate: step 1/2. Isomerase that catalyzes the conversion of deoxy-ribose 1-phosphate (dRib-1-P) and ribose 1-phosphate (Rib-1-P) to deoxy-ribose 5-phosphate (dRib-5-P) and ribose 5-phosphate (Rib-5-P), respectively. The sequence is that of Phosphopentomutase from Clostridium tetani (strain Massachusetts / E88).